The primary structure comprises 402 residues: Type II NADH:quinone oxidoreductase (402 aa).

FAD contacts are provided by residues 12–16, 39–40, and Val-83; these read GAGYA and NK. Glu-172 is an active-site residue. FAD is bound by residues Asp-302, 319 to 320, and Lys-379; that span reads AQ.

It belongs to the NADH dehydrogenase family. Homodimer in solution. Forms homotetramers; dimer of dimers. It depends on FAD as a cofactor.

The protein resides in the cell membrane. It carries out the reaction a quinone + NADH + H(+) = a quinol + NAD(+). The enzyme catalyses a menaquinone + NADH + H(+) = a menaquinol + NAD(+). The catalysed reaction is a ubiquinone + NADH + H(+) = a ubiquinol + NAD(+). Inhibited by HQNO, a quinone derivative. Alternative, nonproton pumping NADH:quinone oxidoreductase that delivers electrons to the respiratory chain by oxidation of NADH and reduction of quinones, and contributes to the regeneration of NAD(+). Can use DMN, a menaquinone analog, 2,3-dimethoxy-5,6-dimethyl-benzoquinone (DDB), an ubiquinone analog, or 2,3,5,6-tetramethyl-1,4-benzoquinone (Duroquinone, DQ) a plastoquinone analog as electron acceptors. The sequence is that of Type II NADH:quinone oxidoreductase from Staphylococcus aureus (strain NCTC 8325 / PS 47).